Here is a 133-residue protein sequence, read N- to C-terminus: Single-stranded DNA-binding protein 2 (133 aa).

Residues 1–103 (MNKTILIGRL…VVAEEVKFLE (103 aa)) enclose the SSB domain.

In terms of assembly, homotetramer.

The sequence is that of Single-stranded DNA-binding protein 2 (ssb2) from Clostridium acetobutylicum (strain ATCC 824 / DSM 792 / JCM 1419 / IAM 19013 / LMG 5710 / NBRC 13948 / NRRL B-527 / VKM B-1787 / 2291 / W).